A 323-amino-acid chain; its full sequence is Pyruvate dehydrogenase E1 component subunit beta (323 aa).

E60 serves as a coordination point for thiamine diphosphate. K(+) contacts are provided by I113, A161, I162, D164, and N166.

In terms of assembly, heterodimer of an alpha and a beta chain. It depends on thiamine diphosphate as a cofactor.

Its subcellular location is the plastid. The protein resides in the chloroplast. It catalyses the reaction N(6)-[(R)-lipoyl]-L-lysyl-[protein] + pyruvate + H(+) = N(6)-[(R)-S(8)-acetyldihydrolipoyl]-L-lysyl-[protein] + CO2. Functionally, the pyruvate dehydrogenase complex catalyzes the overall conversion of pyruvate to acetyl-CoA and CO(2). It contains multiple copies of three enzymatic components: pyruvate dehydrogenase (E1), dihydrolipoamide acetyltransferase (E2) and lipoamide dehydrogenase (E3). The chain is Pyruvate dehydrogenase E1 component subunit beta (pdhB) from Gracilaria tenuistipitata var. liui (Red alga).